Here is a 178-residue protein sequence, read N- to C-terminus: Fucolectin-1 (178 aa).

Positions 1 to 20 are cleaved as a signal peptide; sequence MKVKTIMLLFQILAISTIKS. The F5/8 type C-like stretch occupies residues 29 to 178; it reads QENVAVRGKA…VEVNALLPVN (150 aa). Residues aspartate 59, asparagine 61, and serine 70 each coordinate Ca(2+). Intrachain disulfides connect cysteine 71-cysteine 167, cysteine 103-cysteine 104, and cysteine 129-cysteine 145. Alpha-L-fucose contacts are provided by histidine 73 and arginine 100. Positions 100 to 102 match the Cell attachment site motif; the sequence is RGD. An alpha-L-fucose-binding site is contributed by arginine 107. Residues cysteine 167 and glutamate 168 each contribute to the Ca(2+) site.

The protein belongs to the fucolectin family. As to quaternary structure, homotrimer. Parenchymal hepatocytes.

It is found in the secreted. The protein resides in the extracellular space. Acts as a defensive agent. Recognizes blood group fucosylated oligosaccharides including A, B, H and Lewis B-type antigens. Does not recognize Lewis A antigen and has low affinity for monovalent haptens. The polypeptide is Fucolectin-1 (Anguilla japonica (Japanese eel)).